A 391-amino-acid chain; its full sequence is Phosphoglycerate kinase (391 aa).

Substrate-binding positions include 21-23, Arg36, 59-62, Arg113, and Arg146; these read DLN and HLGR. ATP-binding positions include Lys197, Glu319, and 345-348; that span reads GGDT.

This sequence belongs to the phosphoglycerate kinase family. As to quaternary structure, monomer.

The protein resides in the cytoplasm. It catalyses the reaction (2R)-3-phosphoglycerate + ATP = (2R)-3-phospho-glyceroyl phosphate + ADP. Its pathway is carbohydrate degradation; glycolysis; pyruvate from D-glyceraldehyde 3-phosphate: step 2/5. The polypeptide is Phosphoglycerate kinase (Stenotrophomonas maltophilia (strain R551-3)).